The primary structure comprises 155 residues: 3-hydroxyacyl-[acyl-carrier-protein] dehydratase FabZ (155 aa).

Histidine 58 is a catalytic residue.

This sequence belongs to the thioester dehydratase family. FabZ subfamily.

Its subcellular location is the cytoplasm. It carries out the reaction a (3R)-hydroxyacyl-[ACP] = a (2E)-enoyl-[ACP] + H2O. Its function is as follows. Involved in unsaturated fatty acids biosynthesis. Catalyzes the dehydration of short chain beta-hydroxyacyl-ACPs and long chain saturated and unsaturated beta-hydroxyacyl-ACPs. This chain is 3-hydroxyacyl-[acyl-carrier-protein] dehydratase FabZ, found in Rhizobium johnstonii (strain DSM 114642 / LMG 32736 / 3841) (Rhizobium leguminosarum bv. viciae).